The sequence spans 609 residues: DNA-directed RNA polymerase subunit beta' (609 aa).

Residues Cys-67, Cys-69, Cys-82, and Cys-85 each contribute to the Zn(2+) site. Residues Asp-460, Asp-462, and Asp-464 each contribute to the Mg(2+) site.

This sequence belongs to the RNA polymerase beta' chain family. RpoC1 subfamily. In terms of assembly, in plastids the minimal PEP RNA polymerase catalytic core is composed of four subunits: alpha, beta, beta', and beta''. When a (nuclear-encoded) sigma factor is associated with the core the holoenzyme is formed, which can initiate transcription. Mg(2+) is required as a cofactor. The cofactor is Zn(2+).

It is found in the plastid. It localises to the chloroplast. It catalyses the reaction RNA(n) + a ribonucleoside 5'-triphosphate = RNA(n+1) + diphosphate. DNA-dependent RNA polymerase catalyzes the transcription of DNA into RNA using the four ribonucleoside triphosphates as substrates. The chain is DNA-directed RNA polymerase subunit beta' from Emiliania huxleyi (Coccolithophore).